The primary structure comprises 429 residues: 3-phosphoshikimate 1-carboxyvinyltransferase (429 aa).

Positions 22, 23, and 27 each coordinate 3-phosphoshikimate. Lys-22 contacts phosphoenolpyruvate. 2 residues coordinate phosphoenolpyruvate: Gly-93 and Arg-122. Residues Ser-168, Ser-169, Gln-170, Ser-196, Asp-311, and Lys-338 each coordinate 3-phosphoshikimate. Residue Gln-170 participates in phosphoenolpyruvate binding. Catalysis depends on Asp-311, which acts as the Proton acceptor. Residues Arg-342 and Arg-384 each contribute to the phosphoenolpyruvate site.

This sequence belongs to the EPSP synthase family. As to quaternary structure, monomer.

The protein localises to the cytoplasm. It catalyses the reaction 3-phosphoshikimate + phosphoenolpyruvate = 5-O-(1-carboxyvinyl)-3-phosphoshikimate + phosphate. It functions in the pathway metabolic intermediate biosynthesis; chorismate biosynthesis. Functionally, catalyzes the transfer of the enolpyruvyl moiety of phosphoenolpyruvate (PEP) to the 5-hydroxyl of shikimate-3-phosphate (S3P) to produce enolpyruvyl shikimate-3-phosphate and inorganic phosphate. The polypeptide is 3-phosphoshikimate 1-carboxyvinyltransferase (Methanocaldococcus jannaschii (strain ATCC 43067 / DSM 2661 / JAL-1 / JCM 10045 / NBRC 100440) (Methanococcus jannaschii)).